We begin with the raw amino-acid sequence, 253 residues long: FGFR1 oncogene partner 2 homolog (253 aa).

Residues Ile5–Tyr104 adopt a coiled-coil conformation. At Ser140 the chain carries Phosphoserine. Residues Leu160–Glu223 adopt a coiled-coil conformation. The interval Asp231–Ser253 is disordered. The span at Glu235–Ser253 shows a compositional bias: polar residues.

This sequence belongs to the SIKE family.

The protein resides in the cytoplasm. In terms of biological role, may be involved in wound healing pathway. The sequence is that of FGFR1 oncogene partner 2 homolog (Fgfr1op2) from Mus musculus (Mouse).